The following is an 89-amino-acid chain: Small ribosomal subunit protein uS14 (89 aa).

Belongs to the universal ribosomal protein uS14 family. In terms of assembly, part of the 30S ribosomal subunit. Contacts proteins S3 and S10.

Functionally, binds 16S rRNA, required for the assembly of 30S particles and may also be responsible for determining the conformation of the 16S rRNA at the A site. This Exiguobacterium sibiricum (strain DSM 17290 / CCUG 55495 / CIP 109462 / JCM 13490 / 255-15) protein is Small ribosomal subunit protein uS14.